The sequence spans 865 residues: MVASARVQKLVRRYKLAIATALAILLLQGLVVWSFSGLEEDEPGEKGRQRKPRPLDPGEGSKDTDSSAGRRGSAGRRHGRWRGRAESPGVPVAKVVRAVTSRQRASRRVPPAPPPEAPGRQNLSGAAAGEALIGAPGFPQHGDTGSVEGAPQPTDNTFTPKCEIVGKDALSALARASTKQCQQEIANVVCLHQAGNLMPKSVPRHCQLAGKMSPGVQWEEIRAQQPVGGPPVRIAYMLVVHGRAIRQLKRLLKAVYHEQHFFYIHVDKRSNYLYREVVELAQHYENVRVTPWRMVTIWGGASLLRMYLRSMKDLLEIPGWTWDFFINLSATDYPTRTNEELVAFLSKNRDKNFLKSHGRDNSRFIKKQGLDRLFHECDSHMWRLGERQIPAGIVVDGGSDWFVLTRSFVEYVVYTDDPLVAQLRQFYTYTLLPAESFFHTVLENSPACASLVDNNLRVTNWNRKLGCKCQYKHIVDWCGCSPNDFKPQDFLRLQQVSRPTFFARKFESTVNQEVLEILDFHLYGSYPPSTPALKAYWENIYDVADGPGGLSDVLLTAYTAFARLSLRHAATAVSPLATAVCRFEPRGLPSSVHLYFYDDHFQGYLVTQAVQPSAQGPAETLEMWLMPQRSLKLLGHSDQASRLQSLEVGTEWDPKERLFRNFGGLLGPLDEPVAMQRWARGPNLTATVVWIDPTYVVATSYDITVDADTEVTQYKPPLSLPLRPGAWTVRLLQFWEPLGETRFLVLPLTFNRKLPLRKDDASWLHAGPPHNEYMEQSFQGLSGILNLPQAEALEEAARRHTELTGSALEAWTDGELSNFWSVAGLCAIGPSACPSLELCRLTSWSSLSPDPKSELGPVKADGRLR.

The Cytoplasmic segment spans residues 1–15; it reads MVASARVQKLVRRYK. Residues 16 to 36 traverse the membrane as a helical; Signal-anchor for type II membrane protein segment; the sequence is LAIATALAILLLQGLVVWSFS. Residues 37–865 are Lumenal-facing; sequence GLEEDEPGEK…GPVKADGRLR (829 aa). Residues 39-155 are disordered; that stretch reads EEDEPGEKGR…SVEGAPQPTD (117 aa). The span at 53–65 shows a compositional bias: basic and acidic residues; the sequence is RPLDPGEGSKDTD. The segment covering 73–82 has biased composition (basic residues); that stretch reads SAGRRHGRWR. Residue N122 is glycosylated (N-linked (GlcNAc...) asparagine). Intrachain disulfides connect C162–C190, C206–C448, C467–C480, and C469–C478. Residues V239, D267, and 296 to 298 each bind UDP-alpha-D-xylose; that span reads TIW. N-linked (GlcNAc...) asparagine glycosylation occurs at N327. Residue 400-401 coordinates UDP-alpha-D-xylose; the sequence is DW. Residues S481 and 504 to 505 contribute to the UDP-alpha-D-xylose site; that span reads RK. Cystine bridges form between C581/C833 and C826/C839. N683 is a glycosylation site (N-linked (GlcNAc...) asparagine).

It belongs to the glycosyltransferase 14 family. XylT subfamily. In terms of assembly, monomer. Mg(2+) serves as cofactor. It depends on Mn(2+) as a cofactor. Post-translationally, contains disulfide bonds. Detected in brain, liver, lung, kidney, heart, spleen and testis, and at lower levels in skeletal muscle.

The protein localises to the golgi apparatus membrane. It is found in the secreted. The catalysed reaction is UDP-alpha-D-xylose + L-seryl-[protein] = 3-O-(beta-D-xylosyl)-L-seryl-[protein] + UDP + H(+). The protein operates within glycan metabolism; chondroitin sulfate biosynthesis. Its pathway is glycan metabolism; heparan sulfate biosynthesis. Catalyzes the first step in the biosynthesis of chondroitin sulfate, heparan sulfate and dermatan sulfate proteoglycans, such as DCN. Transfers D-xylose from UDP-D-xylose to specific serine residues of the core protein. This chain is Xylosyltransferase 2 (Xylt2), found in Mus musculus (Mouse).